An 848-amino-acid chain; its full sequence is Protein translocase subunit SecA (848 aa).

Residues Gln-86, 104-108, and Asp-508 contribute to the ATP site; that span reads GEGKT. Residues Cys-833, Cys-835, Cys-844, and Cys-845 each coordinate Zn(2+).

This sequence belongs to the SecA family. As to quaternary structure, monomer and homodimer. Part of the essential Sec protein translocation apparatus which comprises SecA, SecYEG and auxiliary proteins SecDF. Other proteins may also be involved. Requires Zn(2+) as cofactor.

It localises to the cell membrane. It is found in the cytoplasm. The enzyme catalyses ATP + H2O + cellular proteinSide 1 = ADP + phosphate + cellular proteinSide 2.. Its function is as follows. Part of the Sec protein translocase complex. Interacts with the SecYEG preprotein conducting channel. Has a central role in coupling the hydrolysis of ATP to the transfer of proteins into and across the cell membrane, serving as an ATP-driven molecular motor driving the stepwise translocation of polypeptide chains across the membrane. The polypeptide is Protein translocase subunit SecA (Caldicellulosiruptor saccharolyticus (strain ATCC 43494 / DSM 8903 / Tp8T 6331)).